The sequence spans 772 residues: Acyl-homoserine lactone acylase PvdQ (772 aa).

A signal peptide spans 1–28 (MPVFPFCRPMTCAGLAAALVAFSVGVQA). A propeptide spans 199-220 (AQSSAGFASALARQERFAAERG) (spacer peptide). Serine 221 (nucleophile) is an active-site residue.

The protein belongs to the peptidase S45 family. As to quaternary structure, heterodimer of an alpha subunit and a beta subunit processed from the same precursor.

It is found in the periplasm. It catalyses the reaction an N-acyl-L-homoserine lactone + H2O = L-homoserine lactone + a carboxylate. Its function is as follows. Catalyzes the deacylation of acyl-homoserine lactone (AHL or acyl-HSL), releasing homoserine lactone (HSL) and the corresponding fatty acid. Possesses a specificity for the degradation of long-chain acyl-HSLs (side chains of 11 to 14 carbons in length). The protein is Acyl-homoserine lactone acylase PvdQ (pvdQ) of Pseudomonas putida (strain ATCC 47054 / DSM 6125 / CFBP 8728 / NCIMB 11950 / KT2440).